The primary structure comprises 161 residues: Crossover junction endodeoxyribonuclease RuvC (161 aa).

Catalysis depends on residues Asp-9, Glu-72, and Asp-144. Mg(2+) is bound by residues Asp-9, Glu-72, and Asp-144.

The protein belongs to the RuvC family. As to quaternary structure, homodimer which binds Holliday junction (HJ) DNA. The HJ becomes 2-fold symmetrical on binding to RuvC with unstacked arms; it has a different conformation from HJ DNA in complex with RuvA. In the full resolvosome a probable DNA-RuvA(4)-RuvB(12)-RuvC(2) complex forms which resolves the HJ. The cofactor is Mg(2+).

It localises to the cytoplasm. It carries out the reaction Endonucleolytic cleavage at a junction such as a reciprocal single-stranded crossover between two homologous DNA duplexes (Holliday junction).. The RuvA-RuvB-RuvC complex processes Holliday junction (HJ) DNA during genetic recombination and DNA repair. Endonuclease that resolves HJ intermediates. Cleaves cruciform DNA by making single-stranded nicks across the HJ at symmetrical positions within the homologous arms, yielding a 5'-phosphate and a 3'-hydroxyl group; requires a central core of homology in the junction. The consensus cleavage sequence is 5'-(A/T)TT(C/G)-3'. Cleavage occurs on the 3'-side of the TT dinucleotide at the point of strand exchange. HJ branch migration catalyzed by RuvA-RuvB allows RuvC to scan DNA until it finds its consensus sequence, where it cleaves and resolves the cruciform DNA. This is Crossover junction endodeoxyribonuclease RuvC from Synechococcus sp. (strain ATCC 27144 / PCC 6301 / SAUG 1402/1) (Anacystis nidulans).